The primary structure comprises 754 residues: Exocyst complex component EXO84A (754 aa).

2 disordered regions span residues 514 to 540 and 734 to 754; these read RILP…EQRE and GHGE…YTSN. Residues 518-527 are compositionally biased toward polar residues; sequence QGTSQSTPRR. Over residues 528–540 the composition is skewed to basic and acidic residues; the sequence is GSSDRQNRPEQRE. Polar residues predominate over residues 741 to 754; that stretch reads TSPSVSSAKSYTSN.

It belongs to the EXO84 family. As to quaternary structure, the exocyst complex is composed of SEC3, SEC5, SEC6, SEC8, SEC10, EXO70A1 and EXO84.

Component of the exocyst complex involved in the docking of exocytic vesicles with fusion sites on the plasma membrane during regulated or polarized secretion. Involved in polarized cell growth and organ morphogenesis. During cytokinesis, involved in cell plate initiation, cell plate maturation and formation of new primary cell wall. In Arabidopsis thaliana (Mouse-ear cress), this protein is Exocyst complex component EXO84A (EXO84A).